The following is a 143-amino-acid chain: Fluoride-specific ion channel FluC (143 aa).

The next 4 helical transmembrane spans lie at 6 to 26, 38 to 58, 70 to 90, and 103 to 123; these read CILV…VSVL, TILI…LTLA, LFVM…SLQT, and MVNV…GHVV. Gly78 and Thr81 together coordinate Na(+).

Belongs to the fluoride channel Fluc/FEX (TC 1.A.43) family.

Its subcellular location is the cell inner membrane. It carries out the reaction fluoride(in) = fluoride(out). Its activity is regulated as follows. Na(+) is not transported, but it plays an essential structural role and its presence is essential for fluoride channel function. Functionally, fluoride-specific ion channel. Important for reducing fluoride concentration in the cell, thus reducing its toxicity. This chain is Fluoride-specific ion channel FluC, found in Methylobacterium radiotolerans (strain ATCC 27329 / DSM 1819 / JCM 2831 / NBRC 15690 / NCIMB 10815 / 0-1).